We begin with the raw amino-acid sequence, 806 residues long: Lysine-specific demethylase JMJ15 (806 aa).

The disordered stretch occupies residues 1–43; sequence MEPFSAAQNKEDKDTSVEPPRRRCHRKNKGTNVEPPSSPYHPK. A compositionally biased stretch (basic and acidic residues) spans 9 to 21; sequence NKEDKDTSVEPPR. In terms of domain architecture, JmjN spans 61 to 102; sequence APVFHPTSEEFEDTLAYIEKIRPLAESFGICRIVPPSNWSPP. The tract at residues 128–176 is disordered; sequence NRGPVKKKTPKGRKRKRGKYSRTVAPKKRNGSVSKSVSTPKATEEENFG. The segment covering 131–157 has biased composition (basic residues); that stretch reads PVKKKTPKGRKRKRGKYSRTVAPKKRN. The short motif at 132–139 is the Nuclear localization signal element; sequence VKKKTPKG. Over residues 158-168 the composition is skewed to polar residues; that stretch reads GSVSKSVSTPK. The region spanning 261 to 427 is the JmjC domain; it reads KYISSGWNLN…HGQNAVEIYS (167 aa). Fe cation is bound by residues histidine 307, glutamate 309, and histidine 395. Zn(2+)-binding residues include cysteine 514, cysteine 517, cysteine 528, cysteine 531, cysteine 539, histidine 542, cysteine 545, and cysteine 547. The C5HC2 zinc finger occupies 514 to 566; the sequence is CISCFSDLHLSATGCKNCSSLEEYGCTKHDICSCEGKDRFIFLRYTIDELSSL. Positions 629–687 constitute an FYR N-terminal domain; it reads IMDLAAYHVEPINLGFLVVGKLWCNKHAIFPKGFKSRVKFYNVQDPMRISYYVSEIVDA. Residues 689–775 form the FYR C-terminal domain; that stretch reads LLGPLFKVTL…HGQVEYWNHK (87 aa).

This sequence belongs to the JARID1 histone demethylase family. Requires Fe(2+) as cofactor. In terms of tissue distribution, expressed in roots, cotyledons, shoot apex, rosette and cauline leaves, stems, inflorescences and siliques. Expressed at low levels during vegetative growth but to higher levels in young floral organs.

The protein resides in the nucleus. It carries out the reaction N(6),N(6),N(6)-trimethyl-L-lysyl(4)-[histone H3] + 2-oxoglutarate + O2 = N(6),N(6)-dimethyl-L-lysyl(4)-[histone H3] + formaldehyde + succinate + CO2. Its function is as follows. Histone demethylase that demethylates 'Lys-4' (H3K4me) of histone H3 with a specific activity for H3K4me3. No activity on H3K4me2, H3K4me1, H3K9me3/2, H3K27me3/2 and H3K36me3/2. Involved in the control of flowering time by demethylating H3K4me3 at the FLC locus and repressing its expression. The repression of FLC level and reduction in H3K4me3 at the FLC locus results in induction of the flowering activator FT, which is a downstream target of FLC. Promotes salt tolerance by down-regulating the expression of several transcriptions factors involved in stress responses via H3K4me3 and H3K4me2 demethylation. The sequence is that of Lysine-specific demethylase JMJ15 from Arabidopsis thaliana (Mouse-ear cress).